Reading from the N-terminus, the 301-residue chain is Probable alpha-L-glutamate ligase (301 aa).

Positions 104-287 (MQLLSRKGIG…VAGLIVDFIE (184 aa)) constitute an ATP-grasp domain. Residues K141, 178–179 (EF), D187, and 211–213 (RSN) each bind ATP. Residues D248, E260, and N262 each coordinate Mg(2+). The Mn(2+) site is built by D248, E260, and N262.

This sequence belongs to the RimK family. It depends on Mg(2+) as a cofactor. Mn(2+) serves as cofactor.

This Aliivibrio salmonicida (strain LFI1238) (Vibrio salmonicida (strain LFI1238)) protein is Probable alpha-L-glutamate ligase.